The sequence spans 172 residues: MMSNYLSQLISQHKDFPKKGIVFKDVLPLLQHPNELEGLIQGMSTGQIFESSDAIVSIDARGFIFGTAISMKLSKPMIVARKPGKLPGELITHSYELEYGQNSLSIQKKAIENYQSFVIVDDLLATGGTAMCVSEMLKEAGKDITGLSVVVELGQLNARAYLPFPVESQIIF.

The protein belongs to the purine/pyrimidine phosphoribosyltransferase family. In terms of assembly, homodimer.

The protein localises to the cytoplasm. It catalyses the reaction AMP + diphosphate = 5-phospho-alpha-D-ribose 1-diphosphate + adenine. It participates in purine metabolism; AMP biosynthesis via salvage pathway; AMP from adenine: step 1/1. Catalyzes a salvage reaction resulting in the formation of AMP, that is energically less costly than de novo synthesis. The protein is Adenine phosphoribosyltransferase of Prochlorococcus marinus (strain MIT 9211).